Consider the following 146-residue polypeptide: Anti-sigma F factor (146 aa).

Belongs to the anti-sigma-factor family.

The catalysed reaction is L-seryl-[protein] + ATP = O-phospho-L-seryl-[protein] + ADP + H(+). It carries out the reaction L-threonyl-[protein] + ATP = O-phospho-L-threonyl-[protein] + ADP + H(+). In terms of biological role, binds to sigma F and blocks its ability to form an RNA polymerase holoenzyme (E-sigma F). Phosphorylates SpoIIAA on a serine residue. This phosphorylation may enable SpoIIAA to act as an anti-anti-sigma factor that counteracts SpoIIAB and thus releases sigma F from inhibition. This is Anti-sigma F factor from Bacillus cereus (strain G9842).